Consider the following 166-residue polypeptide: Probable chemoreceptor glutamine deamidase CheD 1 (166 aa).

This sequence belongs to the CheD family.

It carries out the reaction L-glutaminyl-[protein] + H2O = L-glutamyl-[protein] + NH4(+). Its function is as follows. Probably deamidates glutamine residues to glutamate on methyl-accepting chemotaxis receptors (MCPs), playing an important role in chemotaxis. The protein is Probable chemoreceptor glutamine deamidase CheD 1 of Leptospira interrogans serogroup Icterohaemorrhagiae serovar copenhageni (strain Fiocruz L1-130).